The sequence spans 201 residues: Large ribosomal subunit protein uL18 (201 aa).

This sequence belongs to the universal ribosomal protein uL18 family. As to quaternary structure, part of the 50S ribosomal subunit. Contacts the 5S and 23S rRNAs.

In terms of biological role, this is one of the proteins that bind and probably mediate the attachment of the 5S RNA into the large ribosomal subunit, where it forms part of the central protuberance. This chain is Large ribosomal subunit protein uL18, found in Thermococcus gammatolerans (strain DSM 15229 / JCM 11827 / EJ3).